Consider the following 366-residue polypeptide: Holliday junction branch migration complex subunit RuvB (366 aa).

The segment at 1 to 49 (MAIISSKKQPPEPNGQPNKRPESAPSVPKEKVLQPEAAIDEQGKQEESI) is disordered. Residues 13–210 (PNGQPNKRPE…FGLIQKLRFY (198 aa)) are large ATPase domain (RuvB-L). ATP contacts are provided by residues isoleucine 49, arginine 50, glycine 91, lysine 94, threonine 95, threonine 96, 157–159 (EDY), arginine 200, tyrosine 210, and arginine 247. Residue threonine 95 participates in Mg(2+) binding. Residues 211–281 (EVDELSQIVL…IAAEALQLFQ (71 aa)) form a small ATPAse domain (RuvB-S) region. A head domain (RuvB-H) region spans residues 284 to 366 (PCGLDWTDRR…TPPNEQLSLL (83 aa)). DNA-binding residues include arginine 339 and arginine 344.

The protein belongs to the RuvB family. Homohexamer. Forms an RuvA(8)-RuvB(12)-Holliday junction (HJ) complex. HJ DNA is sandwiched between 2 RuvA tetramers; dsDNA enters through RuvA and exits via RuvB. An RuvB hexamer assembles on each DNA strand where it exits the tetramer. Each RuvB hexamer is contacted by two RuvA subunits (via domain III) on 2 adjacent RuvB subunits; this complex drives branch migration. In the full resolvosome a probable DNA-RuvA(4)-RuvB(12)-RuvC(2) complex forms which resolves the HJ.

Its subcellular location is the cytoplasm. It carries out the reaction ATP + H2O = ADP + phosphate + H(+). In terms of biological role, the RuvA-RuvB-RuvC complex processes Holliday junction (HJ) DNA during genetic recombination and DNA repair, while the RuvA-RuvB complex plays an important role in the rescue of blocked DNA replication forks via replication fork reversal (RFR). RuvA specifically binds to HJ cruciform DNA, conferring on it an open structure. The RuvB hexamer acts as an ATP-dependent pump, pulling dsDNA into and through the RuvAB complex. RuvB forms 2 homohexamers on either side of HJ DNA bound by 1 or 2 RuvA tetramers; 4 subunits per hexamer contact DNA at a time. Coordinated motions by a converter formed by DNA-disengaged RuvB subunits stimulates ATP hydrolysis and nucleotide exchange. Immobilization of the converter enables RuvB to convert the ATP-contained energy into a lever motion, pulling 2 nucleotides of DNA out of the RuvA tetramer per ATP hydrolyzed, thus driving DNA branch migration. The RuvB motors rotate together with the DNA substrate, which together with the progressing nucleotide cycle form the mechanistic basis for DNA recombination by continuous HJ branch migration. Branch migration allows RuvC to scan DNA until it finds its consensus sequence, where it cleaves and resolves cruciform DNA. In Nostoc sp. (strain PCC 7120 / SAG 25.82 / UTEX 2576), this protein is Holliday junction branch migration complex subunit RuvB.